A 36-amino-acid chain; its full sequence is Photosystem I reaction center subunit VIII (36 aa).

Residues 9–29 (ILTPVVTLVFPGLMFALFFVL) form a helical membrane-spanning segment.

This sequence belongs to the PsaI family.

It localises to the plastid. Its subcellular location is the chloroplast thylakoid membrane. Functionally, may help in the organization of the PsaL subunit. This is Photosystem I reaction center subunit VIII from Emiliania huxleyi (Coccolithophore).